Here is a 313-residue protein sequence, read N- to C-terminus: Small ribosomal subunit protein uS2 (313 aa).

Residues 233–256 show a composition bias toward basic and acidic residues; it reads RTMTDKQSDVAKEAKADGKEEAPK. The disordered stretch occupies residues 233–293; that stretch reads RTMTDKQSDV…SRKLVAAGTA (61 aa).

This sequence belongs to the universal ribosomal protein uS2 family.

This Bdellovibrio bacteriovorus (strain ATCC 15356 / DSM 50701 / NCIMB 9529 / HD100) protein is Small ribosomal subunit protein uS2.